The following is a 310-amino-acid chain: tRNA uridine(34) hydroxylase (310 aa).

A Rhodanese domain is found at 124–218 (SDPEVLLIDT…YFEEVPQEES (95 aa)). Cys178 acts as the Cysteine persulfide intermediate in catalysis.

The protein belongs to the TrhO family.

It carries out the reaction uridine(34) in tRNA + AH2 + O2 = 5-hydroxyuridine(34) in tRNA + A + H2O. Its function is as follows. Catalyzes oxygen-dependent 5-hydroxyuridine (ho5U) modification at position 34 in tRNAs. The polypeptide is tRNA uridine(34) hydroxylase (Pseudomonas putida (strain ATCC 47054 / DSM 6125 / CFBP 8728 / NCIMB 11950 / KT2440)).